The primary structure comprises 392 residues: MTLRKWQRVVLIVLDGVGVGGQPDASAYGDQGASTLPHVAERCGGLKLPTLEKLGLGRIVPIAGVDAVAEPSALYGRMLERSKGKDTTTGHWELAGLVQGEPFASYPKGFPDEIIDAFAGLAGVRPLGNIAASGTEILKQLGMEHLQTGRPIVYTSVDSVFQIAAHEEVMSCEALYALCEGMRKVLDRYRVGRVIARPFVGTSAENFERTSGRRDFAMPPQGDTLLNDMQNAGMTVLGVGKISDIFAGQGISRALKSTDNADGMRKTREALAQIERGLVFTNLVDFDMLYGHRLDALGFGRALEEFDAWLGGFLADFRDSDLLIITADHGCDPTTPGTDHTRESVPLLVWSPALVCGQDLGVRESFSDAAATIADLFDLEIRTGQSFMDRLL.

The Mn(2+) site is built by Asp-15, Asp-287, His-292, Asp-328, His-329, and His-340.

Belongs to the phosphopentomutase family. Mn(2+) is required as a cofactor.

The protein localises to the cytoplasm. The enzyme catalyses 2-deoxy-alpha-D-ribose 1-phosphate = 2-deoxy-D-ribose 5-phosphate. The catalysed reaction is alpha-D-ribose 1-phosphate = D-ribose 5-phosphate. The protein operates within carbohydrate degradation; 2-deoxy-D-ribose 1-phosphate degradation; D-glyceraldehyde 3-phosphate and acetaldehyde from 2-deoxy-alpha-D-ribose 1-phosphate: step 1/2. In terms of biological role, isomerase that catalyzes the conversion of deoxy-ribose 1-phosphate (dRib-1-P) and ribose 1-phosphate (Rib-1-P) to deoxy-ribose 5-phosphate (dRib-5-P) and ribose 5-phosphate (Rib-5-P), respectively. This Syntrophotalea carbinolica (strain DSM 2380 / NBRC 103641 / GraBd1) (Pelobacter carbinolicus) protein is Phosphopentomutase.